Here is a 569-residue protein sequence, read N- to C-terminus: Urease subunit alpha (569 aa).

Positions 131 to 569 constitute a Urease domain; it reads GGIDAHIHWI…LPLAQRYFLF (439 aa). Residues His136, His138, and Lys219 each coordinate Ni(2+). An N6-carboxylysine modification is found at Lys219. His221 serves as a coordination point for substrate. Ni(2+)-binding residues include His248 and His274. His322 (proton donor) is an active-site residue. Residue Asp362 coordinates Ni(2+).

Belongs to the metallo-dependent hydrolases superfamily. Urease alpha subunit family. Heterotrimer of UreA (gamma), UreB (beta) and UreC (alpha) subunits. Three heterotrimers associate to form the active enzyme. It depends on Ni cation as a cofactor. Carboxylation allows a single lysine to coordinate two nickel ions.

It is found in the cytoplasm. It catalyses the reaction urea + 2 H2O + H(+) = hydrogencarbonate + 2 NH4(+). It participates in nitrogen metabolism; urea degradation; CO(2) and NH(3) from urea (urease route): step 1/1. The sequence is that of Urease subunit alpha from Magnetococcus marinus (strain ATCC BAA-1437 / JCM 17883 / MC-1).